The following is a 663-amino-acid chain: Glucans biosynthesis glucosyltransferase H (663 aa).

Helical transmembrane passes span 64-86, 101-123, 413-435, 470-492, 558-580, and 584-606; these read WMLG…DTIA, LAPL…VVLM, LVIG…AGLI, AWAM…ILVL, EAWA…FWFT, and LTAT…LGAH.

The protein belongs to the glycosyltransferase 2 family. OpgH subfamily.

The protein resides in the cell inner membrane. Its pathway is glycan metabolism; osmoregulated periplasmic glucan (OPG) biosynthesis. In terms of biological role, involved in the biosynthesis of osmoregulated periplasmic glucans (OPGs). The protein is Glucans biosynthesis glucosyltransferase H of Caulobacter vibrioides (strain ATCC 19089 / CIP 103742 / CB 15) (Caulobacter crescentus).